The following is a 157-amino-acid chain: Transcription elongation factor GreA (157 aa).

The protein belongs to the GreA/GreB family.

Functionally, necessary for efficient RNA polymerase transcription elongation past template-encoded arresting sites. The arresting sites in DNA have the property of trapping a certain fraction of elongating RNA polymerases that pass through, resulting in locked ternary complexes. Cleavage of the nascent transcript by cleavage factors such as GreA or GreB allows the resumption of elongation from the new 3'terminus. GreA releases sequences of 2 to 3 nucleotides. This is Transcription elongation factor GreA from Bartonella henselae (strain ATCC 49882 / DSM 28221 / CCUG 30454 / Houston 1) (Rochalimaea henselae).